The primary structure comprises 386 residues: Alanine racemase 1 (386 aa).

The active-site Proton acceptor; specific for D-alanine is K38. N6-(pyridoxal phosphate)lysine is present on K38. R136 is a substrate binding site. Y267 (proton acceptor; specific for L-alanine) is an active-site residue. M315 is a substrate binding site.

Belongs to the alanine racemase family. Pyridoxal 5'-phosphate is required as a cofactor.

The catalysed reaction is L-alanine = D-alanine. The protein operates within amino-acid biosynthesis; D-alanine biosynthesis; D-alanine from L-alanine: step 1/1. In terms of biological role, catalyzes the interconversion of L-alanine and D-alanine. May also act on other amino acids. The protein is Alanine racemase 1 (alr1) of Clostridium acetobutylicum (strain ATCC 824 / DSM 792 / JCM 1419 / IAM 19013 / LMG 5710 / NBRC 13948 / NRRL B-527 / VKM B-1787 / 2291 / W).